Consider the following 223-residue polypeptide: Pre-mRNA-splicing factor SPF27 (223 aa).

Residues 139–223 (NENLLHMIDC…GENKENIEDY (85 aa)) adopt a coiled-coil conformation.

It belongs to the SPF27 family. In terms of assembly, component of the pre-catalytic and catalytic spliceosome complexes. Component of the postcatalytic spliceosome P complex.

It is found in the nucleus. Functionally, required for pre-mRNA splicing as component of the activated spliceosome. May have a scaffolding role in the spliceosome assembly as it contacts all other components of the core complex. This chain is Pre-mRNA-splicing factor SPF27 (bcas2), found in Xenopus tropicalis (Western clawed frog).